Here is a 422-residue protein sequence, read N- to C-terminus: Histidine--tRNA ligase (422 aa).

This sequence belongs to the class-II aminoacyl-tRNA synthetase family. Homodimer.

It is found in the cytoplasm. The enzyme catalyses tRNA(His) + L-histidine + ATP = L-histidyl-tRNA(His) + AMP + diphosphate + H(+). This Vibrio cholerae serotype O1 (strain ATCC 39541 / Classical Ogawa 395 / O395) protein is Histidine--tRNA ligase.